A 555-amino-acid chain; its full sequence is Polypyrimidine tract-binding protein 1 (555 aa).

Met1 is subject to N-acetylmethionine. The residue at position 16 (Ser16) is a Phosphoserine. RRM domains lie at 58-142, 183-259, and 361-412; these read RVIH…SSPN, LRII…FSKL, and SVLL…SQAQ. Lys64 is covalently cross-linked (Glycyl lysine isopeptide (Lys-Gly) (interchain with G-Cter in SUMO2)). Tyr126 carries the phosphotyrosine modification. Phosphothreonine is present on Thr137. Ser140 carries the post-translational modification Phosphoserine. A Glycyl lysine isopeptide (Lys-Gly) (interchain with G-Cter in SUMO2) cross-link involves residue Lys217. The tract at residues 435 to 457 is disordered; sequence HQSVQLPREGQEDQGLTKDYGSS. The residue at position 457 (Ser457) is a Phosphoserine. Residues 478 to 553 form the RRM 4 domain; the sequence is ATLHLSNIPP…HHLRVSFSKS (76 aa).

As to quaternary structure, monomer. Part of a ternary complex containing KHSRP, PTBP1, PTBP2 and HNRPH1. Interacts with SFPQ. Interacts with RAVER1. Interacts with IVNS1ABP (via BACK domain); the interaction is direct. Expressed in myoblast; expression gradually decreases during muscle cell differentiation (at protein level).

The protein localises to the nucleus. In terms of biological role, plays a role in pre-mRNA splicing and in the regulation of alternative splicing events. Activates exon skipping of its own pre-mRNA during muscle cell differentiation. Binds to the polypyrimidine tract of introns. May promote RNA looping when bound to two separate polypyrimidine tracts in the same pre-mRNA. May promote the binding of U2 snRNP to pre-mRNA. Cooperates with RAVER1 to modulate switching between mutually exclusive exons during maturation of the TPM1 pre-mRNA. Represses the splicing of MAPT/Tau exon 10. Binds to polypyrimidine-rich controlling element (PCE) of CFTR and promotes exon skipping of CFTR exon 9, thereby antagonizing TIA1 and its role in exon inclusion of CFTR exon 9. Plays a role in the splicing of pyruvate kinase PKM by binding repressively to a polypyrimidine tract flanking PKM exon 9, inhibiting exon 9 inclusion and resulting in exon 10 inclusion and production of the PKM M2 isoform. The protein is Polypyrimidine tract-binding protein 1 (Ptbp1) of Mus musculus (Mouse).